A 309-amino-acid chain; its full sequence is Epidermal retinol dehydrogenase 2 (309 aa).

A helical transmembrane segment spans residues 11–31 (LFIFLGKSLFSLLEAMIFALL). Residue 44-68 (LITGAGSGLGRLLALQFARLGSVLV) participates in NADP(+) binding. A substrate-binding site is contributed by S177. The active-site Proton acceptor is Y190. The chain crosses the membrane as a helical span at residues 270–290 (LLYFMMFLKSFLPLKTGLLIA).

The protein belongs to the short-chain dehydrogenases/reductases (SDR) family. Detected in adult lung. Detected at low levels in adult brain, heart, testis, placenta, cervix, pancreas, uterus, stomach, rectum, small intestine, colon, esophagus, thymus, skin, and skin keratinocyte. Expression is higher in psoriasis lesions relative to unaffected skin from psoriasis patients. Detected in fetal kidney, skin and lung.

The protein resides in the endoplasmic reticulum membrane. It carries out the reaction all-trans-retinol--[retinol-binding protein] + NAD(+) = all-trans-retinal--[retinol-binding protein] + NADH + H(+). It participates in cofactor metabolism; retinol metabolism. In terms of biological role, oxidoreductase with strong preference for NAD. Active in both the oxidative and reductive directions. Oxidizes all-trans-retinol in all-trans-retinaldehyde. No activity was detected with 11-cis-retinol or 11-cis-retinaldehyde as substrates with either NAD(+)/NADH or NADP(+)/NADPH. In Homo sapiens (Human), this protein is Epidermal retinol dehydrogenase 2.